The sequence spans 322 residues: Glycerol-3-phosphate dehydrogenase [NAD(P)+] (322 aa).

Trp-11, Arg-31, Arg-32, and Lys-101 together coordinate NADPH. Residues Lys-101 and Gly-130 each contribute to the sn-glycerol 3-phosphate site. Ala-134 contributes to the NADPH binding site. The sn-glycerol 3-phosphate site is built by Lys-184, Asp-237, Ser-247, Arg-248, and Asn-249. Residue Lys-184 is the Proton acceptor of the active site. Arg-248 is an NADPH binding site. The NADPH site is built by Val-270 and Glu-272.

The protein belongs to the NAD-dependent glycerol-3-phosphate dehydrogenase family.

The protein resides in the cytoplasm. It carries out the reaction sn-glycerol 3-phosphate + NAD(+) = dihydroxyacetone phosphate + NADH + H(+). The catalysed reaction is sn-glycerol 3-phosphate + NADP(+) = dihydroxyacetone phosphate + NADPH + H(+). It participates in membrane lipid metabolism; glycerophospholipid metabolism. Its function is as follows. Catalyzes the reduction of the glycolytic intermediate dihydroxyacetone phosphate (DHAP) to sn-glycerol 3-phosphate (G3P), the key precursor for phospholipid synthesis. The protein is Glycerol-3-phosphate dehydrogenase [NAD(P)+] of Thermus thermophilus (strain ATCC BAA-163 / DSM 7039 / HB27).